The primary structure comprises 902 residues: Probable polyribonucleotide nucleotidyltransferase 1, chloroplastic (902 aa).

The N-terminal 66 residues, 1–66, are a transit peptide targeting the chloroplast; the sequence is MLATPGALHH…RRRAAGARVR (66 aa). Residues 44–53 show a composition bias toward low complexity; it reads VAASASTSRR. Residues 44-93 are disordered; sequence VAASASTSRRGGARRRAAGARVRASVGEEAPPVVTEEASTSGGPTKFSTK. Over residues 80–91 the composition is skewed to polar residues; that stretch reads EASTSGGPTKFS. Residues 693–753 form the KH domain; sequence PLIHVMKVKP…SSLEKSKAII (61 aa). The region spanning 763–832 is the S1 motif domain; sequence GEIYRNCEIK…DKGQLRLSSR (70 aa). A disordered region spans residues 833–902; sequence ALLPDANQES…ASQGSEMGTE (70 aa). Positions 839–850 are enriched in polar residues; the sequence is NQESSSKQQAGG. The span at 852-862 shows a compositional bias: basic and acidic residues; it reads TREKAPQKDNL. The span at 877–888 shows a compositional bias: low complexity; the sequence is EASTAENNATAS.

This sequence belongs to the polyribonucleotide nucleotidyltransferase family.

Its subcellular location is the plastid. The protein localises to the chloroplast. The catalysed reaction is RNA(n+1) + phosphate = RNA(n) + a ribonucleoside 5'-diphosphate. Its function is as follows. Involved in the metabolism of all major classes of plastid RNAs. Required for efficient 3'-end processing of mRNAs and 3'-end maturation of rRNA transcripts, but is not sufficient to mediate their degradation. Mediates tRNA degradation. May function as a poly(A) mRNA 3'-5' degrading phosphorylase. This chain is Probable polyribonucleotide nucleotidyltransferase 1, chloroplastic (PNP1), found in Oryza sativa subsp. japonica (Rice).